Consider the following 337-residue polypeptide: 1-aminocyclopropane-1-carboxylate deaminase (337 aa).

Lysine 50 carries the N6-(pyridoxal phosphate)lysine modification. The Nucleophile role is filled by serine 77.

The protein belongs to the ACC deaminase/D-cysteine desulfhydrase family. Homotrimer. Requires pyridoxal 5'-phosphate as cofactor.

The catalysed reaction is 1-aminocyclopropane-1-carboxylate + H2O = 2-oxobutanoate + NH4(+). Functionally, catalyzes a cyclopropane ring-opening reaction, the irreversible conversion of 1-aminocyclopropane-1-carboxylate (ACC) to ammonia and alpha-ketobutyrate. Allows growth on ACC as a nitrogen source. This Methylobacterium sp. (strain 4-46) protein is 1-aminocyclopropane-1-carboxylate deaminase.